The primary structure comprises 297 residues: Beta-glucoside kinase (297 aa).

5–11 (AFDIGGT) lines the ATP pocket.

The protein belongs to the ROK (NagC/XylR) family. In terms of assembly, homotetramer.

The enzyme catalyses D-cellobiose + ATP = 6-phospho-beta-D-glucosyl-(1-&gt;4)-D-glucose + ADP + H(+). With respect to regulation, is inhibited by N-ethylmaleimide in vitro, but ATP affords considerable protection against the inhibitor. In terms of biological role, catalyzes the ATP-dependent phosphorylation of a wide variety of beta-D-glucosides, to produce 6-phospho-beta-D-glucosides including cellobiose-6'-P, gentiobiose-6'-P, cellobiitol-6-P, salicin-6-P, and arbutin-6-P. Is not able to phosphorylate alpha-D-glucosides. May have a dual role of kinase and transcriptional regulator of the cellobiose-PTS operon. The polypeptide is Beta-glucoside kinase (bglK) (Klebsiella pneumoniae).